We begin with the raw amino-acid sequence, 53 residues long: uncharacterized protein (53 aa).

The helical transmembrane segment at 13-35 (FLLHSFTFPIAHCPSFSWASFFF) threads the bilayer.

The protein resides in the membrane. This is an uncharacterized protein from Saccharomyces cerevisiae (strain ATCC 204508 / S288c) (Baker's yeast).